Consider the following 122-residue polypeptide: Large ribosomal subunit protein uL14 (122 aa).

Belongs to the universal ribosomal protein uL14 family. In terms of assembly, part of the 50S ribosomal subunit. Forms a cluster with proteins L3 and L19. In the 70S ribosome, L14 and L19 interact and together make contacts with the 16S rRNA in bridges B5 and B8.

Functionally, binds to 23S rRNA. Forms part of two intersubunit bridges in the 70S ribosome. The chain is Large ribosomal subunit protein uL14 from Agathobacter rectalis (strain ATCC 33656 / DSM 3377 / JCM 17463 / KCTC 5835 / VPI 0990) (Eubacterium rectale).